Consider the following 116-residue polypeptide: Iron-sulfur cluster insertion protein ErpA (116 aa).

3 residues coordinate iron-sulfur cluster: cysteine 44, cysteine 108, and cysteine 110.

The protein belongs to the HesB/IscA family. Homodimer. It depends on iron-sulfur cluster as a cofactor.

Functionally, required for insertion of 4Fe-4S clusters for at least IspG. The protein is Iron-sulfur cluster insertion protein ErpA of Shewanella putrefaciens (strain CN-32 / ATCC BAA-453).